The primary structure comprises 319 residues: D-ribose/D-allose-binding protein (319 aa).

The signal sequence occupies residues 1-29; that stretch reads MKRVASRRLLAAVVLTACSSFLPLSAVHA.

It belongs to the bacterial solute-binding protein 2 family.

It localises to the periplasm. Functionally, binds specifically both D-ribose and D-allose, with affinities in the lower micromolar range. In Pseudomonas aeruginosa (strain ATCC 15692 / DSM 22644 / CIP 104116 / JCM 14847 / LMG 12228 / 1C / PRS 101 / PAO1), this protein is D-ribose/D-allose-binding protein.